Here is a 108-residue protein sequence, read N- to C-terminus: Protein translation factor SUI1 (108 aa).

The interval 1-20 (MSIENLKSFDPFADTGDDEA) is disordered.

It belongs to the SUI1 family.

Additional factor that functions in concert with eIF-2 and the initiator tRNA in directing the ribosome to the proper start site of translation. This Eremothecium gossypii (strain ATCC 10895 / CBS 109.51 / FGSC 9923 / NRRL Y-1056) (Yeast) protein is Protein translation factor SUI1 (SUI1A).